The chain runs to 188 residues: Elongation factor P (188 aa).

Belongs to the elongation factor P family.

Its subcellular location is the cytoplasm. Its pathway is protein biosynthesis; polypeptide chain elongation. Functionally, involved in peptide bond synthesis. Stimulates efficient translation and peptide-bond synthesis on native or reconstituted 70S ribosomes in vitro. Probably functions indirectly by altering the affinity of the ribosome for aminoacyl-tRNA, thus increasing their reactivity as acceptors for peptidyl transferase. This Rhodopseudomonas palustris (strain HaA2) protein is Elongation factor P.